The sequence spans 396 residues: Lipid-A-disaccharide synthase (396 aa).

Belongs to the LpxB family.

The catalysed reaction is a lipid X + a UDP-2-N,3-O-bis[(3R)-3-hydroxyacyl]-alpha-D-glucosamine = a lipid A disaccharide + UDP + H(+). It participates in bacterial outer membrane biogenesis; LPS lipid A biosynthesis. Condensation of UDP-2,3-diacylglucosamine and 2,3-diacylglucosamine-1-phosphate to form lipid A disaccharide, a precursor of lipid A, a phosphorylated glycolipid that anchors the lipopolysaccharide to the outer membrane of the cell. In Nitrobacter winogradskyi (strain ATCC 25391 / DSM 10237 / CIP 104748 / NCIMB 11846 / Nb-255), this protein is Lipid-A-disaccharide synthase.